A 428-amino-acid polypeptide reads, in one-letter code: Cytochrome c biogenesis protein CcsB (428 aa).

3 helical membrane-spanning segments follow: residues 14–34 (LRFA…GTFI), 72–92 (SFWF…CSFR), and 162–182 (IGPL…AYGS).

Belongs to the Ccs1/CcsB family. As to quaternary structure, may interact with CcsA.

Its subcellular location is the cellular thylakoid membrane. Required during biogenesis of c-type cytochromes (cytochrome c6 and cytochrome f) at the step of heme attachment. The protein is Cytochrome c biogenesis protein CcsB of Prochlorococcus marinus (strain AS9601).